We begin with the raw amino-acid sequence, 59 residues long: Large ribosomal subunit protein uL30 (59 aa).

Belongs to the universal ribosomal protein uL30 family. As to quaternary structure, part of the 50S ribosomal subunit.

The polypeptide is Large ribosomal subunit protein uL30 (Buchnera aphidicola subsp. Acyrthosiphon kondoi (Acyrthosiphon kondoi symbiotic bacterium)).